The sequence spans 128 residues: Large-conductance mechanosensitive channel (128 aa).

The next 2 helical transmembrane spans lie at 11–31 (FALKGNVLDLAVAVVIGAAFG) and 70–90 (GAFIQSIVDFVIIAFAIFIFV).

This sequence belongs to the MscL family. Homopentamer.

The protein resides in the cell membrane. In terms of biological role, channel that opens in response to stretch forces in the membrane lipid bilayer. May participate in the regulation of osmotic pressure changes within the cell. This Listeria innocua serovar 6a (strain ATCC BAA-680 / CLIP 11262) protein is Large-conductance mechanosensitive channel.